Reading from the N-terminus, the 166-residue chain is Peptide deformylase (166 aa).

Cys-88 and His-130 together coordinate Fe cation. The active site involves Glu-131. His-134 contributes to the Fe cation binding site.

Belongs to the polypeptide deformylase family. It depends on Fe(2+) as a cofactor.

It catalyses the reaction N-terminal N-formyl-L-methionyl-[peptide] + H2O = N-terminal L-methionyl-[peptide] + formate. Its function is as follows. Removes the formyl group from the N-terminal Met of newly synthesized proteins. Requires at least a dipeptide for an efficient rate of reaction. N-terminal L-methionine is a prerequisite for activity but the enzyme has broad specificity at other positions. The polypeptide is Peptide deformylase (Thermoanaerobacter sp. (strain X514)).